Here is a 915-residue protein sequence, read N- to C-terminus: Bifunctional uridylyltransferase/uridylyl-removing enzyme (915 aa).

Residues 1 to 360 form a uridylyltransferase region; that stretch reads MFNCAVTAID…PDEERPKKQP (360 aa). Residues 361 to 731 are uridylyl-removing; sequence INARFNQVGE…EHRELALDAV (371 aa). Positions 478–594 constitute an HD domain; the sequence is VDAHTLFLIR…TLFADLVGNV (117 aa). 2 ACT domains span residues 732-817 and 840-915; these read QVFV…RIPR and IMSL…NDSI.

It belongs to the GlnD family. Mg(2+) serves as cofactor.

The catalysed reaction is [protein-PII]-L-tyrosine + UTP = [protein-PII]-uridylyl-L-tyrosine + diphosphate. It carries out the reaction [protein-PII]-uridylyl-L-tyrosine + H2O = [protein-PII]-L-tyrosine + UMP + H(+). Its activity is regulated as follows. Uridylyltransferase (UTase) activity is inhibited by glutamine, while glutamine activates uridylyl-removing (UR) activity. Its function is as follows. Modifies, by uridylylation and deuridylylation, the PII regulatory proteins (GlnB and homologs), in response to the nitrogen status of the cell that GlnD senses through the glutamine level. Under low glutamine levels, catalyzes the conversion of the PII proteins and UTP to PII-UMP and PPi, while under higher glutamine levels, GlnD hydrolyzes PII-UMP to PII and UMP (deuridylylation). Thus, controls uridylylation state and activity of the PII proteins, and plays an important role in the regulation of nitrogen assimilation and metabolism. In Psychrobacter arcticus (strain DSM 17307 / VKM B-2377 / 273-4), this protein is Bifunctional uridylyltransferase/uridylyl-removing enzyme.